A 65-amino-acid chain; its full sequence is Large ribosomal subunit protein bL35 (65 aa).

The tract at residues 1-26 (MPKIKTVRGAAKRFKKTASGGFKRKQ) is disordered. Residues 10–26 (AAKRFKKTASGGFKRKQ) show a composition bias toward basic residues.

This sequence belongs to the bacterial ribosomal protein bL35 family.

This Mannheimia succiniciproducens (strain KCTC 0769BP / MBEL55E) protein is Large ribosomal subunit protein bL35.